Reading from the N-terminus, the 383-residue chain is tRNA-specific 2-thiouridylase MnmA (383 aa).

ATP is bound by residues 9–16 and M35; that span reads GMSGGVDS. The segment at 95 to 97 is interaction with target base in tRNA; sequence NPD. Catalysis depends on C100, which acts as the Nucleophile. An intrachain disulfide couples C100 to C196. Residue G124 participates in ATP binding. The interaction with tRNA stretch occupies residues 146-148; that stretch reads KDQ. The Cysteine persulfide intermediate role is filled by C196. Residues 308-309 form an interaction with tRNA region; it reads RY.

This sequence belongs to the MnmA/TRMU family.

Its subcellular location is the cytoplasm. The catalysed reaction is S-sulfanyl-L-cysteinyl-[protein] + uridine(34) in tRNA + AH2 + ATP = 2-thiouridine(34) in tRNA + L-cysteinyl-[protein] + A + AMP + diphosphate + H(+). Catalyzes the 2-thiolation of uridine at the wobble position (U34) of tRNA, leading to the formation of s(2)U34. The chain is tRNA-specific 2-thiouridylase MnmA from Burkholderia mallei (strain NCTC 10247).